Here is a 186-residue protein sequence, read N- to C-terminus: MQDSQKSSPGWHGTTILTVRKGGKVVIGGDGQVSIGQTVIKSNAKKVRKLGRGDVIGGFAGATADAFTLFERLEAKLEQYPGQLTRAAVELAKDWRTDRYLRRLEAMMIVADKDVSLVLTGTGDVLEPEAGVMAIGSGGNYALAAARALLDTDKDAETIVRRSLDIAADICVYTNRNVTIESLATG.

T14 is an active-site residue. Residues A168, C171, and T174 each contribute to the Na(+) site.

The protein belongs to the peptidase T1B family. HslV subfamily. In terms of assembly, a double ring-shaped homohexamer of HslV is capped on each side by a ring-shaped HslU homohexamer. The assembly of the HslU/HslV complex is dependent on binding of ATP.

It localises to the cytoplasm. It catalyses the reaction ATP-dependent cleavage of peptide bonds with broad specificity.. With respect to regulation, allosterically activated by HslU binding. Protease subunit of a proteasome-like degradation complex believed to be a general protein degrading machinery. The polypeptide is ATP-dependent protease subunit HslV (Bradyrhizobium diazoefficiens (strain JCM 10833 / BCRC 13528 / IAM 13628 / NBRC 14792 / USDA 110)).